Reading from the N-terminus, the 502-residue chain is Bifunctional purine biosynthesis protein PurH (502 aa).

Residues 1 to 144 (MKKRALISVF…KNFQDVVVIS (144 aa)) enclose the MGS-like domain.

Belongs to the PurH family.

The enzyme catalyses (6R)-10-formyltetrahydrofolate + 5-amino-1-(5-phospho-beta-D-ribosyl)imidazole-4-carboxamide = 5-formamido-1-(5-phospho-D-ribosyl)imidazole-4-carboxamide + (6S)-5,6,7,8-tetrahydrofolate. The catalysed reaction is IMP + H2O = 5-formamido-1-(5-phospho-D-ribosyl)imidazole-4-carboxamide. It functions in the pathway purine metabolism; IMP biosynthesis via de novo pathway; 5-formamido-1-(5-phospho-D-ribosyl)imidazole-4-carboxamide from 5-amino-1-(5-phospho-D-ribosyl)imidazole-4-carboxamide (10-formyl THF route): step 1/1. Its pathway is purine metabolism; IMP biosynthesis via de novo pathway; IMP from 5-formamido-1-(5-phospho-D-ribosyl)imidazole-4-carboxamide: step 1/1. This chain is Bifunctional purine biosynthesis protein PurH, found in Clostridium beijerinckii (strain ATCC 51743 / NCIMB 8052) (Clostridium acetobutylicum).